A 272-amino-acid chain; its full sequence is ATP synthase subunit a (272 aa).

Helical transmembrane passes span 41–61 (VLNIDSMFFSVVLGLVFLVLF), 101–121 (VIAPLALTIFVWVFLMNFMDL), 147–167 (DVNITLSMALGVFVLILFYSI), 221–241 (LIFILIAGLLPWWSQWILSVP), and 243–263 (AIFHILIISLQAFIFMVLTIV).

Belongs to the ATPase A chain family. As to quaternary structure, F-type ATPases have 2 components, CF(1) - the catalytic core - and CF(0) - the membrane proton channel. CF(1) has five subunits: alpha(3), beta(3), gamma(1), delta(1), epsilon(1). CF(0) has three main subunits: a(1), b(2) and c(9-12). The alpha and beta chains form an alternating ring which encloses part of the gamma chain. CF(1) is attached to CF(0) by a central stalk formed by the gamma and epsilon chains, while a peripheral stalk is formed by the delta and b chains.

It is found in the cell inner membrane. In terms of biological role, key component of the proton channel; it plays a direct role in the translocation of protons across the membrane. The chain is ATP synthase subunit a from Erwinia tasmaniensis (strain DSM 17950 / CFBP 7177 / CIP 109463 / NCPPB 4357 / Et1/99).